A 983-amino-acid chain; its full sequence is Next to BRCA1 gene 1 protein (983 aa).

The PB1 domain occupies 4–86 (QVTLNVTFKN…NQLQMQVHEG (83 aa)). Ser-117 bears the Phosphoserine mark. The disordered stretch occupies residues 126–149 (MKTTEEPTAEARSPVPCDTDKPQD). A ZZ-type zinc finger spans residues 214-266 (SWHIACSHCQKRIVGVRYQCSLCPSYNICEDCEAGPYSHDTNHILLKFRRPVV). The Zn(2+) site is built by Cys-219, Cys-222, Cys-233, Cys-236, Cys-242, Cys-245, His-252, and His-256. ATG8 family proteins-binding stretches follow at residues 544–638 (ASER…PASV) and 745–756 (ASSEDYIIILPE). Thr-588 bears the Phosphothreonine mark. Phosphoserine occurs at positions 592 and 598. Residues 611 to 645 (EESEGAGLKASPDSTVLTKRKAETPASVEETEEDL) are disordered. A disordered region spans residues 768–813 (MYSSALSQPGLERGAEGEPGIESGQEPAEARERLPERESQPKEQSI). Residues 795 to 808 (AEARERLPERESQP) show a composition bias toward basic and acidic residues. Ser-855 is subject to Phosphoserine. The segment at 867–894 (DHVRGEPRGSTGLANSRQKSCDHSRHHN) is disordered. Residues 930–974 (SEDQTAALMAHLFEMGFCDRQLNLRLLRKHNHNILQVVTELLQVN) enclose the UBA domain.

Homooligomer and heterooligomer. Interacts with TRIM55. Interacts with titin/TTN. Interacts with RNF29, USP8, MAP1LC3A, MAP1LC3B, MAP1LC3C, GABARAP, GABARAPL1 and GABARAPL2. Binds to ubiquitin and ubiquitinated proteins. Interacts with SQSTM1. Interacts with TAX1BP1. Interacts with IRF3; this interaction mediates autophagic degradation of IRF3. Interacts with IL12A and IL12B. In terms of processing, phosphorylated by GSK3A; this phosphorylation inhibits NBR1 involvement in the formation of ubiquitinated protein aggregates.

The protein localises to the cytoplasm. Its subcellular location is the cytoplasmic vesicle. It localises to the autophagosome. The protein resides in the lysosome. It is found in the myofibril. The protein localises to the sarcomere. Its subcellular location is the m line. Ubiquitin-binding autophagy adapter that participates in different processes including host defense or intracellular homeostasis. Possesses a double function during the selective autophagy by acting as a shuttle bringing ubiquitinated proteins to autophagosomes and also by participating in the formation of protein aggregates. Plays a role in the regulation of the innate immune response by modulating type I interferon production and targeting ubiquitinated IRF3 for autophagic degradation. In response to oxidative stress, promotes an increase in SQSTM1 levels, phosphorylation, and body formation by preventing its autophagic degradation. In turn, activates the KEAP1-NRF2/NFE2L2 antioxidant pathway. Also plays non-autophagy role by mediating the shuttle of IL-12 to late endosome for subsequent secretion. In Rattus norvegicus (Rat), this protein is Next to BRCA1 gene 1 protein (Nbr1).